A 1143-amino-acid chain; its full sequence is Probable ATP-dependent RNA helicase DHX34 (1143 aa).

2 disordered regions span residues 1 to 24 (MPPP…EEEA) and 75 to 94 (TSRK…PALA). The span at 76–85 (SRKEEKDPGQ) shows a compositional bias: basic and acidic residues. Positions 172–332 (LQTLKEHQVV…FSNAPVVQVP (161 aa)) constitute a Helicase ATP-binding domain. 185 to 192 (GDTGCGKS) serves as a coordination point for ATP. The DEAH box signature appears at 279-282 (DEVH). One can recognise a Helicase C-terminal domain in the interval 368–536 (SIDHKYPPEE…SLVLQMKSMS (169 aa)). Residues 701–955 (QAAQVGDSYS…LRARWESALD (255 aa)) form a negatively regulates interaction with UPF1 region. The tract at residues 724 to 766 (LKRQHEEGAGRRRKVLRLQEEQDGGSSDEDRAGPAPPGASDGV) is disordered. 2 positions are modified to phosphoserine: Ser-749 and Ser-750. A required for phosphorylation of UPF1. Not required for interaction with UPF1 region spans residues 810 to 1143 (PQLAVPDAFN…EVLRHRKQHV (334 aa)). Residues 957 to 1143 (QLAHQAQQQL…EVLRHRKQHV (187 aa)) form a required for the interaction with SMG1 and subsequent phosphorylation of UPF1 region.

It belongs to the DEAD box helicase family. DEAH subfamily. Forms a complex with RUVBL1 and RUVBL2. Part of a complex composed of SMG1, DHX34 and UPF1; within the complex DHX34 acts as a scaffolding protein to facilitate SMG1 phosphorylation of UPF1. Interacts with UPF1, MOV10, EIF4A3, XRN2, SMG6, SMG7, SMG9, UPF3A, UPF3B, CASC3/MLN51, XRN1, DIS3 and DCP1A; the interactions are RNA-independent. Interacts with NCBP1/CPB80; the interaction is RNA-dependent. Interacts (via C-terminus) with SMG1; the interaction is RNA-independent. In terms of tissue distribution, expressed in whole blood, testis and spleen. Also expressed in the brain.

The catalysed reaction is ATP + H2O = ADP + phosphate + H(+). Probable ATP-binding RNA helicase required for nonsense-mediated decay (NMD) degradation of mRNA transcripts containing premature stop codons. Promotes the phosphorylation of UPF1 along with its interaction with key NMD pathway proteins UPF2 and EIF4A3. Interaction with the RUVBL1-RUVBL2 complex results in loss of nucleotide binding ability and ATP hydrolysis of the complex. Negatively regulates the nucleotide binding ability and ATP hydrolysis of the RUVBL1-RUVBL2 complex via induction of N-terminus conformation changes of the RUVBL2 subunits. This is Probable ATP-dependent RNA helicase DHX34 from Homo sapiens (Human).